Here is a 515-residue protein sequence, read N- to C-terminus: MRLIILNLLSLGITPSVVGHSGPHRQETQNLNNFLESNAINPAAINGETRHTGGVHLACAILEASNQTAVVFPSDGELYTQIDKAHASATAPKNPACIYTPNDVKGVSLGVKVATFVQAKFAIRSGGHSPMEYFANIDGGVLISLAGIKTLEYNADTQTQRSGFGNLWQDVYRHVNAQGRTVVGGRTGSVGLALTLGGGLSHFSNAYGWAAQNVLSYEMVLADGSIVIASEEENSDLYFAVKAGANNFGIVTHIVQRTYPLGKIWGGSMIFPGNASAQFMAALADYQAKGQLDKKSAILPYVGLIADAVVAQFSYLEPVERPEAFEAFYDIPVIQDLTQVWDTFAAMVTAPIPYNMTRFSYATTDLLYDKEAYLEIERICHKYIPRMRKLEGGDIMLMPQPISVSMVGEARARGSDPMGVADQPQLWFVVSSGWNLAQDDAEAESIMLDALAEVEEYTKSRALHLPFYFLNDAFSTQMPLQSYGAVTYGKLQAASRKYDPTRVFQELVPGGFKLV.

Positions 1-25 (MRLIILNLLSLGITPSVVGHSGPHR) are cleaved as a signal peptide. The N-linked (GlcNAc...) asparagine glycan is linked to N66. Residues 91–261 (APKNPACIYT…THIVQRTYPL (171 aa)) form the FAD-binding PCMH-type domain. Residue H128 is modified to Pros-8alpha-FAD histidine. N274 and N355 each carry an N-linked (GlcNAc...) asparagine glycan.

This sequence belongs to the oxygen-dependent FAD-linked oxidoreductase family. FAD serves as cofactor.

It carries out the reaction prosolanapyrone II + O2 = prosolanapyrone III + H2O2. The catalysed reaction is prosolanapyrone III = (-)-solanapyrone A. It catalyses the reaction prosolanapyrone III = solanapyrone D. It participates in phytotoxin biosynthesis. In terms of biological role, bifunctional solanapyrone synthase; part of the gene cluster that mediates the biosynthesis of the phytotoxin solanapyrone, a causal agent of early blight disease of potato and tomato. The prosolanapyrone synthase sol1 is a polyketide synthase that produces the octaketide desmethylprosolanapyrone I via sequential condensations of 7 malonyl-CoA units with one acetyl-CoA unit, and one methylation step. The octaketide backbone is further methylated by the sol2 O-methyltransferase to yield prosolanapyrone I. Prosolanapyrone I is hydroxylated to prosolanapyrone II by the cytochrome P450 monooxygenase sol6. The solanapyrone synthase sol5 then catalyzes the oxidation of prosolanapyrone II and the subsequent Diels Alder cycloisomerization of the product prosolanapyrone III to solanapyrones A and D. Solanapyrones A and D are then converted into solanapyrones B and E, respectively, by the sol3 dehydrogenase. The sequence is that of Bifunctional solanapyrone synthase (sol5) from Alternaria solani.